A 263-amino-acid chain; its full sequence is GTP cyclohydrolase 1 type 2 homolog (263 aa).

The a divalent metal cation site is built by H76, H77, D113, H231, and E235.

The protein belongs to the GTP cyclohydrolase I type 2/NIF3 family. In terms of assembly, homohexamer.

In Deinococcus radiodurans (strain ATCC 13939 / DSM 20539 / JCM 16871 / CCUG 27074 / LMG 4051 / NBRC 15346 / NCIMB 9279 / VKM B-1422 / R1), this protein is GTP cyclohydrolase 1 type 2 homolog.